The chain runs to 401 residues: Formate dehydrogenase (401 aa).

Residues Ile-123 and Asn-147 each coordinate substrate. NAD(+) contacts are provided by residues Ser-148, 202 to 203 (RI), Asp-222, 257 to 261 (PLHPE), Thr-283, Asp-309, 333 to 336 (HISG), and Ser-381.

It belongs to the D-isomer specific 2-hydroxyacid dehydrogenase family. FDH subfamily. In terms of assembly, homodimer.

The protein resides in the cytoplasm. The enzyme catalyses formate + NAD(+) = CO2 + NADH. Catalyzes the NAD(+)-dependent oxidation of formate to carbon dioxide. Formate oxidation is the final step in the methanol oxidation pathway in methylotrophic microorganisms. Has a role in the detoxification of exogenous formate in non-methylotrophic organisms. In Pseudomonas sp. (strain 101) (Achromobacter parvulus T1), this protein is Formate dehydrogenase.